We begin with the raw amino-acid sequence, 249 residues long: INO80 complex subunit 1 (249 aa).

2 C2H2-type zinc fingers span residues 73-100 (YTCEWDDCPRKGMVQTSRFALVAHLRSH) and 106-131 (FICSVPECDRSFTRSDALAKHMRTVH).

Component of the INO80 chromatin remodeling complex.

Its subcellular location is the nucleus. The protein localises to the cytoplasm. Component of the INO80 complex which remodels chromatin by shifting nucleosomes and is involved in DNA repair. The protein is INO80 complex subunit 1 (iec1) of Schizosaccharomyces pombe (strain 972 / ATCC 24843) (Fission yeast).